The sequence spans 284 residues: Shikimate kinase (284 aa).

85-95 (PLAAGLKSSSA) provides a ligand contact to ATP.

This sequence belongs to the GHMP kinase family. Archaeal shikimate kinase subfamily.

It is found in the cytoplasm. It catalyses the reaction shikimate + ATP = 3-phosphoshikimate + ADP + H(+). Its pathway is metabolic intermediate biosynthesis; chorismate biosynthesis; chorismate from D-erythrose 4-phosphate and phosphoenolpyruvate: step 5/7. This is Shikimate kinase from Halobacterium salinarum (strain ATCC 29341 / DSM 671 / R1).